The chain runs to 252 residues: Endonuclease NucS (252 aa).

The protein belongs to the NucS endonuclease family.

The protein localises to the cytoplasm. In terms of biological role, cleaves both 3' and 5' ssDNA extremities of branched DNA structures. In Sulfurisphaera tokodaii (strain DSM 16993 / JCM 10545 / NBRC 100140 / 7) (Sulfolobus tokodaii), this protein is Endonuclease NucS.